The sequence spans 168 residues: ATP synthase F(1) complex subunit delta, mitochondrial (168 aa).

The transit peptide at 1 to 22 (MLPAALLRRPGLGRLVRHARAY) directs the protein to the mitochondrion. N6-acetyllysine; alternate occurs at positions 136 and 165. N6-succinyllysine; alternate occurs at positions 136 and 165.

It belongs to the ATPase epsilon chain family. Component of the ATP synthase complex composed at least of ATP5F1A/subunit alpha, ATP5F1B/subunit beta, ATP5MC1/subunit c (homooctomer), MT-ATP6/subunit a, MT-ATP8/subunit 8, ATP5ME/subunit e, ATP5MF/subunit f, ATP5MG/subunit g, ATP5MK/subunit k, ATP5MJ/subunit j, ATP5F1C/subunit gamma, ATP5F1D/subunit delta, ATP5F1E/subunit epsilon, ATP5PF/subunit F6, ATP5PB/subunit b, ATP5PD/subunit d, ATP5PO/subunit OSCP. ATP synthase complex consists of a soluble F(1) head domain (subunits alpha(3) and beta(3)) - the catalytic core - and a membrane F(0) domain - the membrane proton channel (subunits c, a, 8, e, f, g, k and j). These two domains are linked by a central stalk (subunits gamma, delta, and epsilon) rotating inside the F1 region and a stationary peripheral stalk (subunits F6, b, d, and OSCP). Component of a complex composed at least by ATPIF1, ATP5F1A, ATP5F1B, ATP5F1C AND ATP5F1E.

It localises to the mitochondrion. The protein resides in the mitochondrion inner membrane. In terms of biological role, subunit delta, of the mitochondrial membrane ATP synthase complex (F(1)F(0) ATP synthase or Complex V) that produces ATP from ADP in the presence of a proton gradient across the membrane which is generated by electron transport complexes of the respiratory chain. ATP synthase complex consist of a soluble F(1) head domain - the catalytic core - and a membrane F(1) domain - the membrane proton channel. These two domains are linked by a central stalk rotating inside the F(1) region and a stationary peripheral stalk. During catalysis, ATP synthesis in the catalytic domain of F(1) is coupled via a rotary mechanism of the central stalk subunits to proton translocation. In vivo, can only synthesize ATP although its ATP hydrolase activity can be activated artificially in vitro. With the central stalk subunit gamma, is essential for the biogenesis of F(1) catalytic part of the ATP synthase complex namely in the formation of F1 assembly intermediate. In Homo sapiens (Human), this protein is ATP synthase F(1) complex subunit delta, mitochondrial.